The chain runs to 657 residues: UvrABC system protein B (657 aa).

The Helicase ATP-binding domain maps to 23–414; it reads KSIKKGNKYQ…KENIFHQIMR (392 aa). 36–43 serves as a coordination point for ATP; it reads GVTGSGKT. The short motif at 89–112 is the Beta-hairpin element; sequence YYDYYQPEAYIPRTDVFIEKDSST. In terms of domain architecture, Helicase C-terminal spans 431–593; that stretch reads QVEILFDEAK…ITPTSVKRHI (163 aa). The UVR domain maps to 622–657; that stretch reads AKLAKELRKQMLEAAKALEFEKAAAIRDEINKLRDL.

Belongs to the UvrB family. In terms of assembly, forms a heterotetramer with UvrA during the search for lesions. Interacts with UvrC in an incision complex.

Its subcellular location is the cytoplasm. Its function is as follows. The UvrABC repair system catalyzes the recognition and processing of DNA lesions. A damage recognition complex composed of 2 UvrA and 2 UvrB subunits scans DNA for abnormalities. Upon binding of the UvrA(2)B(2) complex to a putative damaged site, the DNA wraps around one UvrB monomer. DNA wrap is dependent on ATP binding by UvrB and probably causes local melting of the DNA helix, facilitating insertion of UvrB beta-hairpin between the DNA strands. Then UvrB probes one DNA strand for the presence of a lesion. If a lesion is found the UvrA subunits dissociate and the UvrB-DNA preincision complex is formed. This complex is subsequently bound by UvrC and the second UvrB is released. If no lesion is found, the DNA wraps around the other UvrB subunit that will check the other stand for damage. This chain is UvrABC system protein B, found in Campylobacter jejuni (strain RM1221).